A 172-amino-acid chain; its full sequence is Protein PLASTID REDOX INSENSITIVE 2, chloroplastic (172 aa).

The transit peptide at 1–54 directs the protein to the chloroplast; that stretch reads MAARLWAAAVAPATLNPPLLTLSASSSPSSSRLRRSVLGRLRSRAPRPADFVCR.

Its subcellular location is the plastid. The protein localises to the chloroplast stroma. It localises to the chloroplast nucleoid. Functionally, required for the activity of the plastid-encoded RNA polymerase (PEP) and full expression of genes transcribed by PEP. This chain is Protein PLASTID REDOX INSENSITIVE 2, chloroplastic, found in Oryza sativa subsp. japonica (Rice).